Reading from the N-terminus, the 356-residue chain is Butyrate kinase 2 (356 aa).

It belongs to the acetokinase family. In terms of assembly, homodimer.

Its subcellular location is the cytoplasm. It catalyses the reaction butanoate + ATP = butanoyl phosphate + ADP. Its pathway is lipid metabolism; butanoate metabolism. Catalyzes the conversion of butyryl-CoA through butyryl phosphate to butyrate. The polypeptide is Butyrate kinase 2 (buk2) (Clostridium acetobutylicum (strain ATCC 824 / DSM 792 / JCM 1419 / IAM 19013 / LMG 5710 / NBRC 13948 / NRRL B-527 / VKM B-1787 / 2291 / W)).